The chain runs to 120 residues: Movement protein TGB2 (120 aa).

The Cytoplasmic portion of the chain corresponds to 1–8; it reads MPFAQPPD. The chain crosses the membrane as a helical span at residues 9-29; sequence YSKSVFPIAVGIAVAVVLFTL. The Lumenal portion of the chain corresponds to 30–71; that stretch reads TRSTLPQVGDNIHNLPHGGNYQDGTKRISYCGPRDSFPSSSL. The chain crosses the membrane as a helical span at residues 72–92; the sequence is ISSGTPMIIGIIIFLIFAIYV. Residues 93 to 120 are Cytoplasmic-facing; that stretch reads SEKWSRSGSRRCSCCVPGAPACTATVHE.

Belongs to the Tymovirales TGBp2 protein family.

It localises to the host endoplasmic reticulum membrane. Functionally, plays a role in viral cell-to-cell propagation, by facilitating genome transport to neighboring plant cells through plasmosdesmata,. This Crataegus (hawthorn) protein is Movement protein TGB2.